Here is a 454-residue protein sequence, read N- to C-terminus: Cytochrome b-c1 complex subunit 2, mitochondrial (454 aa).

The transit peptide at 1 to 35 directs the protein to the mitochondrion; sequence MISRSALSRGSQLALRRPAAAKTAQRGFAAAAASP.

Belongs to the peptidase M16 family. UQCRC2/QCR2 subfamily. As to quaternary structure, component of the ubiquinol-cytochrome c oxidoreductase (cytochrome b-c1 complex, complex III, CIII), a multisubunit enzyme composed of 10 subunits. The complex is composed of 3 respiratory subunits cytochrome b (cob), cytochrome c1 (cyt-1) and Rieske protein (fes-1), 2 core protein subunits pep and ucr-1, and 5 low-molecular weight protein subunits qcr6, qcr7, qcr8, qcr9 and probably NCU16844/qcr10. The complex exists as an obligatory dimer and forms supercomplexes (SCs) in the inner mitochondrial membrane with NADH-ubiquinone oxidoreductase (complex I, CI) and cytochrome c oxidase (complex IV, CIV), resulting in different assemblies (supercomplexes SCI(1)III(2), SCIII(2)IV(1) and SCIII(2)IV(2) as well as higher order I(x)III(y)IV(z) megacomplexes).

Its subcellular location is the mitochondrion inner membrane. Its function is as follows. Component of the ubiquinol-cytochrome c oxidoreductase, a multisubunit transmembrane complex that is part of the mitochondrial electron transport chain which drives oxidative phosphorylation. The respiratory chain contains 3 multisubunit complexes succinate dehydrogenase (complex II, CII), ubiquinol-cytochrome c oxidoreductase (cytochrome b-c1 complex, complex III, CIII) and cytochrome c oxidase (complex IV, CIV), that cooperate to transfer electrons derived from NADH and succinate to molecular oxygen, creating an electrochemical gradient over the inner membrane that drives transmembrane transport and the ATP synthase. The cytochrome b-c1 complex catalyzes electron transfer from ubiquinol to cytochrome c, linking this redox reaction to translocation of protons across the mitochondrial inner membrane, with protons being carried across the membrane as hydrogens on the quinol. In the process called Q cycle, 2 protons are consumed from the matrix, 4 protons are released into the intermembrane space and 2 electrons are passed to cytochrome c. This is Cytochrome b-c1 complex subunit 2, mitochondrial (ucr-1) from Neurospora crassa (strain ATCC 24698 / 74-OR23-1A / CBS 708.71 / DSM 1257 / FGSC 987).